A 210-amino-acid polypeptide reads, in one-letter code: uncharacterized protein (210 aa).

The next 6 helical transmembrane spans lie at 9-29 (WVVT…IIAK), 35-55 (LIVN…MAWP), 64-84 (GPAV…VVAV), 91-111 (GLYG…AAMN), 149-169 (IWFS…AVFW), and 190-210 (IGQA…LFPV).

It is found in the cell membrane. This is an uncharacterized protein from Mycobacterium bovis (strain ATCC BAA-935 / AF2122/97).